The sequence spans 164 residues: Thiol peroxidase (164 aa).

One can recognise a Thioredoxin domain in the interval 18–163 (INEGDFAPDF…FDAALAAYKN (146 aa)). C60 (cysteine sulfenic acid (-SOH) intermediate) is an active-site residue. A disulfide bridge connects residues C60 and C93.

It belongs to the peroxiredoxin family. Tpx subfamily. Homodimer.

The enzyme catalyses a hydroperoxide + [thioredoxin]-dithiol = an alcohol + [thioredoxin]-disulfide + H2O. Functionally, thiol-specific peroxidase that catalyzes the reduction of hydrogen peroxide and organic hydroperoxides to water and alcohols, respectively. Plays a role in cell protection against oxidative stress by detoxifying peroxides. This is Thiol peroxidase from Staphylococcus aureus (strain Mu50 / ATCC 700699).